We begin with the raw amino-acid sequence, 1059 residues long: Pleckstrin homology domain-containing family M member 1 (1059 aa).

One can recognise an RUN domain in the interval 40 to 182 (TSEDGDANTM…LSFELSYKSA (143 aa)). Ser-218 bears the Phosphoserine mark. Disordered regions lie at residues 218-244 (SLDSISHSSGSEDIEVQHSGHKIRRDR), 272-334 (LQEN…TPMF), and 354-411 (SEEP…DQGS). 2 stretches are compositionally biased toward polar residues: residues 313–334 (SKAQVNSAPSSGPSQESDTPMF) and 392–401 (GSTSDQQPSS). A phosphoserine mark is found at Ser-430, Ser-433, and Ser-488. Residues 536–627 (GLMKLGTVAR…WLDRVREALQ (92 aa)) enclose the PH 1 domain. The short motif at 634-640 (EEEWVNI) is the LIR element. Residues 657–1059 (LPPYSALLPE…RKYQEQNTVS (403 aa)) form an interaction with RAB7A region. The PH 2 domain maps to 686 to 780 (DAIKESLLYL…WRDLVRKVLA (95 aa)). The Phorbol-ester/DAG-type zinc finger occupies 989–1043 (QHVYHCDLCTQRGFICQICHHQDIIFPFEFDTTVRCAECRTVFHQSCQAVVRKGC).

Interacts (via N- and C-terminus) with RAB7A (GTP-bound form). Simultaneously interacts with RAB7A and ARL8B; bringing about clustering and fusion of late endosomes and lysosomes. Interacts (via RUN domain) with ARL8B (GTP-bound form); the interaction is required for PLEKHM1 localization to lysosomes and for ARL8B function in delivery and degradation of endocytic and autophagic cargo in lysosomes. PLEKHM1 and PLEKHM2 compete for interaction with ARL8B. Interacts with ARL8A; the interaction is weaker than with ARL8B. Interacts with VPS41, VPS11, VPS18, VPS33A and VPS39; indicative for an association with the HOPS complex; the interactions with, at least, VPS41, VPS11, VPS18 and VPS33A require ARL8B. Interacts with GABARAP, GABARAPL, GABARAPL2, MAP1LC3A, MAP1LC3B and MAP1LC3C. Interacts with PAFAH1B. Interacts (via N- and C-terminus) with NDEL1. Interacts (via C-terminus) with MAP3K7. Interacts (via N- and C-terminus) with FAM98A. Interacts (via C-terminus) with DEF8; this interaction is weak but increased in a RAB7A-dependent manner. May interact with sialyl-lex-positive protein. Expressed in testis, skeletal muscle, lung, liver, spleen, brain, heart, kidney and bone. Weakly expressed in monocytes (at protein level).

The protein localises to the autolysosome membrane. Its subcellular location is the endosome membrane. The protein resides in the late endosome membrane. It is found in the lysosome membrane. In terms of biological role, acts as a multivalent adapter protein that regulates Rab7-dependent and HOPS complex-dependent fusion events in the endolysosomal system and couples autophagic and the endocytic trafficking pathways. Acts as a dual effector of RAB7A and ARL8B that simultaneously binds these GTPases, bringing about clustering and fusion of late endosomes and lysosomes. Required for late stages of endolysosomal maturation, facilitating both endocytosis-mediated degradation of growth factor receptors and autophagosome clearance. Interaction with Arl8b is a crucial factor in the terminal maturation of autophagosomes and to mediate autophagosome-lysosome fusion. Positively regulates lysosome peripheral distribution and ruffled border formation in osteoclasts. May be involved in negative regulation of endocytic transport from early endosome to late endosome/lysosome implicating its association with Rab7. May have a role in sialyl-lex-mediated transduction of apoptotic signals. Involved in bone resorption. In Rattus norvegicus (Rat), this protein is Pleckstrin homology domain-containing family M member 1.